The sequence spans 218 residues: Thiopurine S-methyltransferase (218 aa).

Residues Trp10, Leu45, Glu66, and Arg123 each contribute to the S-adenosyl-L-methionine site.

The protein belongs to the class I-like SAM-binding methyltransferase superfamily. TPMT family.

It is found in the cytoplasm. It carries out the reaction S-adenosyl-L-methionine + a thiopurine = S-adenosyl-L-homocysteine + a thiopurine S-methylether.. This is Thiopurine S-methyltransferase from Shewanella amazonensis (strain ATCC BAA-1098 / SB2B).